A 310-amino-acid polypeptide reads, in one-letter code: Ribosome production factor 2 homolog (310 aa).

The Brix domain occupies lysine 29–serine 239. A disordered region spans residues leucine 281 to glutamate 310. Over residues alanine 295 to glutamate 310 the composition is skewed to basic residues.

This sequence belongs to the RPF2 family.

Its subcellular location is the nucleus. The protein resides in the nucleolus. The protein is Ribosome production factor 2 homolog of Oryza sativa subsp. japonica (Rice).